Here is a 796-residue protein sequence, read N- to C-terminus: MSESTGIPQGSPAVGAAGSAPAAPGVGGTECSGAAVGSARIAVKKAQLRSSPRPKKLEKLGVYSSCKAEGACKCNGWKSQNPPPTPPPPTPPRAEQPTAVSLMEPCRSCSHALGDHVTHLENVSEEEMNRLLGIVLDVEYLYTCVHKEEDPDTKQVYFSLFKLLRKCILQMGRPVVEALESPPFEKPSIEQGVNNFVQYKFSHLPSKERQTIVELAKMFLNQINYWQLETPSQKRQRAPDDDVAGYKVNYTRWLCYCNVPQFCDSLPRYEATQIFGRIFLRSVFTIMRKQLLEQARQEKDKLPPEKRTLILTHFPKFLSMLEEEVYSHNSPIWSENFMIGLSGGQIPTVVSAPPVNRSLYYSSSPAPVELAGGGSVSPARKTASVLEPNPGGEKRKPAEPLSHEDSKRPRVVGDIPMELINEVMSTITDPTAMLGPETSLLSAHSARDEAARLEERRGVIEFHVIGNSLNQKPNKKILMWLVGLQNVFSHQLPRMPKEYITRLVFDPKHKTLSLIKDGRVIGGICFRMFPTQGFTEIVFCAVTSNEQVKGYGTHLMNHLKEYHIKHEILNFLTYADEYAIGYFKKQGFSKDIKVPKSKYVGYIKDYEGATLMGCELNPCIPYTEFSVIIKKQKEIIKKLIERKQAQIRKVYPGLSCFKEGVRQIAIESIPGIRETGWKPLGKSKELKDPDQLYSTLKNILTQVKSHPNAWPFMEPVKKNEAPGYYQVIRFPMDLKTMSERLKSRYYTTRKLFMADMQRIFTNCREYNPPESEYYKCANLLEKFFYTKIKEAGLIDK.

Disordered stretches follow at residues 1-32 (MSES…TECS), 77-97 (WKSQ…AEQP), and 371-408 (AGGG…DSKR). Over residues 10–24 (GSPAVGAAGSAPAAP) the composition is skewed to low complexity. A compositionally biased stretch (pro residues) spans 81–94 (NPPPTPPPPTPPRA). The segment covering 392-408 (GEKRKPAEPLSHEDSKR) has biased composition (basic and acidic residues). Residues 469-617 (LNQKPNKKIL…GATLMGCELN (149 aa)) form the N-acetyltransferase domain. Residue Glu536 is the Proton donor/acceptor of the active site. Acetyl-CoA contacts are provided by residues 540–542 (CAV), 547–553 (QVKGYGT), and 578–581 (YAIG). In terms of domain architecture, Bromo spans 687–791 (KDPDQLYSTL…KFFYTKIKEA (105 aa)).

This sequence belongs to the acetyltransferase family. GCN5 subfamily.

It localises to the nucleus. It is found in the cytoplasm. Its subcellular location is the cytoskeleton. The protein localises to the microtubule organizing center. The protein resides in the centrosome. It catalyses the reaction L-lysyl-[histone] + acetyl-CoA = N(6)-acetyl-L-lysyl-[histone] + CoA + H(+). It carries out the reaction L-lysyl-[protein] + acetyl-CoA = N(6)-acetyl-L-lysyl-[protein] + CoA + H(+). The enzyme catalyses spermidine + acetyl-CoA = N(8)-acetylspermidine + CoA + H(+). Its function is as follows. Functions as a histone acetyltransferase (HAT) to promote transcriptional activation. Has significant histone acetyltransferase activity with core histones (H3 and H4), and also with nucleosome core particles. Has a a strong preference for acetylation of H3 at 'Lys-9' (H3K9ac). Also acetylates non-histone proteins. Involved in heart and limb development by mediating acetylation of tbx5. Also acetylates spermidine. Together with kat2a, required for growth and differentiation of craniofacial cartilage and bone by regulating acetylation of histone H3 at 'Lys-9' (H3K9ac). This chain is Histone acetyltransferase KAT2B, found in Danio rerio (Zebrafish).